Reading from the N-terminus, the 136-residue chain is Sec-independent protein translocase protein TatB (136 aa).

The chain crosses the membrane as a helical span at residues 1–21; the sequence is MFDIGFWELVLISVIGLVVLG. Residues 66 to 136 are disordered; sequence ASKQGLSDLD…TTPPRQDKNE (71 aa). 2 stretches are compositionally biased toward basic and acidic residues: residues 77–89 and 96–107; these read ELQK…KETA and YKKDIDDIKTSL. Residues 108 to 130 are compositionally biased toward polar residues; it reads DKNPSGTTQQENSILDSSKTTPP.

It belongs to the TatB family. The Tat system comprises two distinct complexes: a TatABC complex, containing multiple copies of TatA, TatB and TatC subunits, and a separate TatA complex, containing only TatA subunits. Substrates initially bind to the TatABC complex, which probably triggers association of the separate TatA complex to form the active translocon.

Its subcellular location is the cell inner membrane. In terms of biological role, part of the twin-arginine translocation (Tat) system that transports large folded proteins containing a characteristic twin-arginine motif in their signal peptide across membranes. Together with TatC, TatB is part of a receptor directly interacting with Tat signal peptides. TatB may form an oligomeric binding site that transiently accommodates folded Tat precursor proteins before their translocation. In Psychromonas ingrahamii (strain DSM 17664 / CCUG 51855 / 37), this protein is Sec-independent protein translocase protein TatB.